Consider the following 346-residue polypeptide: Patr class I histocompatibility antigen, CH28 alpha chain (346 aa).

An N-terminal signal peptide occupies residues 1-21 (MAPRSLLLLFSGALALTETWA). Residues 22 to 111 (GSHSLRYFST…LLRRYNQSEA (90 aa)) form an alpha-1 region. Over 22-305 (GSHSLRYFST…EQSPQPTIPI (284 aa)) the chain is Extracellular. Asn-107 carries N-linked (GlcNAc...) asparagine glycosylation. An alpha-2 region spans residues 112–203 (GSHTLQGMNG…ENGKETLQRA (92 aa)). Cystine bridges form between Cys-122–Cys-185 and Cys-224–Cys-280. The tract at residues 204–295 (DPPKAHIAHH…GLPQPLTLRW (92 aa)) is alpha-3. Residues 206-294 (PKAHIAHHPI…EGLPQPLTLR (89 aa)) enclose the Ig-like C1-type domain. The tract at residues 296–305 (EQSPQPTIPI) is connecting peptide. A helical membrane pass occupies residues 306–329 (VGIVAGLVVLGAVVTGAVVAAVMW). Residues 330-346 (RKKSSDRNRGSYSQAAV) are Cytoplasmic-facing.

This sequence belongs to the MHC class I family. Heterodimer of an alpha chain and a beta chain (beta-2-microglobulin).

It is found in the membrane. Functionally, involved in the presentation of foreign antigens to the immune system. This chain is Patr class I histocompatibility antigen, CH28 alpha chain, found in Pan troglodytes (Chimpanzee).